An 85-amino-acid polypeptide reads, in one-letter code: MKVTLIAILTCAAVLVLHTTAAEELEAESQLMEVGMPDTELAAVDEERLFECSVSCEIGKEGNKDCKKKKCKGGWKCKFNMCVKV.

An N-terminal signal peptide occupies residues 1–22 (MKVTLIAILTCAAVLVLHTTAA). The propeptide occupies 23–48 (EELEAESQLMEVGMPDTELAAVDEER). Disulfide bonds link cysteine 52-cysteine 66, cysteine 56-cysteine 77, and cysteine 71-cysteine 82.

It belongs to the neurotoxin 12 (Hwtx-2) family. 02 (Hwtx-2) subfamily. As to expression, expressed by the venom gland.

The protein resides in the secreted. Postsynaptic neurotoxin. This Cyriopagopus hainanus (Chinese bird spider) protein is U4-theraphotoxin-Hhn1j.